We begin with the raw amino-acid sequence, 436 residues long: Gamma-glutamyl phosphate reductase (436 aa).

Belongs to the gamma-glutamyl phosphate reductase family.

It localises to the cytoplasm. The enzyme catalyses L-glutamate 5-semialdehyde + phosphate + NADP(+) = L-glutamyl 5-phosphate + NADPH + H(+). The protein operates within amino-acid biosynthesis; L-proline biosynthesis; L-glutamate 5-semialdehyde from L-glutamate: step 2/2. Its function is as follows. Catalyzes the NADPH-dependent reduction of L-glutamate 5-phosphate into L-glutamate 5-semialdehyde and phosphate. The product spontaneously undergoes cyclization to form 1-pyrroline-5-carboxylate. This is Gamma-glutamyl phosphate reductase from Prochlorococcus marinus (strain SARG / CCMP1375 / SS120).